The sequence spans 254 residues: Dihydroorotate dehydrogenase B (NAD(+)), electron transfer subunit (254 aa).

The 99-residue stretch at 1-99 (MLQTEMKVIQ…LGPLGKGFDI (99 aa)) folds into the FAD-binding FR-type domain. FAD is bound by residues 50–53 (RPIS), 67–69 (LYR), and 74–75 (GT). Residues cysteine 218, cysteine 223, cysteine 226, and cysteine 241 each coordinate [2Fe-2S] cluster.

The protein belongs to the PyrK family. In terms of assembly, heterotetramer of 2 PyrK and 2 PyrD type B subunits. [2Fe-2S] cluster serves as cofactor. It depends on FAD as a cofactor.

The protein operates within pyrimidine metabolism; UMP biosynthesis via de novo pathway; orotate from (S)-dihydroorotate (NAD(+) route): step 1/1. In terms of biological role, responsible for channeling the electrons from the oxidation of dihydroorotate from the FMN redox center in the PyrD type B subunit to the ultimate electron acceptor NAD(+). The polypeptide is Dihydroorotate dehydrogenase B (NAD(+)), electron transfer subunit (Listeria monocytogenes serotype 4b (strain F2365)).